Reading from the N-terminus, the 459-residue chain is Cysteine--tRNA ligase (459 aa).

C31 serves as a coordination point for Zn(2+). Positions 33-43 (PTVYDNPHIGN) match the 'HIGH' region motif. The Zn(2+) site is built by C216, H241, and E245. Positions 274–278 (KMSKS) match the 'KMSKS' region motif. K277 provides a ligand contact to ATP.

Belongs to the class-I aminoacyl-tRNA synthetase family. In terms of assembly, monomer. The cofactor is Zn(2+).

Its subcellular location is the cytoplasm. It catalyses the reaction tRNA(Cys) + L-cysteine + ATP = L-cysteinyl-tRNA(Cys) + AMP + diphosphate. The chain is Cysteine--tRNA ligase from Rickettsia felis (strain ATCC VR-1525 / URRWXCal2) (Rickettsia azadi).